The following is a 102-amino-acid chain: Keratinocyte differentiation-associated protein (102 aa).

Residues 1–22 form the signal peptide; that stretch reads MKIPILPVVALLSLLALHAVQG.

As to expression, expression restricted to suprabasal keratinocytes of the epidermis.

It localises to the secreted. May act as a soluble regulator of keratinocyte differentiation. May play an important role in embryonic skin morphogenesis. This is Keratinocyte differentiation-associated protein from Mus musculus (Mouse).